A 102-amino-acid polypeptide reads, in one-letter code: Small ribosomal subunit protein uS10 (102 aa).

The protein belongs to the universal ribosomal protein uS10 family. As to quaternary structure, part of the 30S ribosomal subunit.

In terms of biological role, involved in the binding of tRNA to the ribosomes. The protein is Small ribosomal subunit protein uS10 of Thiobacillus denitrificans (strain ATCC 25259 / T1).